Here is a 745-residue protein sequence, read N- to C-terminus: Cytoskeleton-associated protein 2-like (745 aa).

Residues 25–141 (AKGKLKSQNT…GELSRKPVGS (117 aa)) form a disordered region. A compositionally biased stretch (polar residues) spans 30–61 (KSQNTKPYLKSKNNCQNQPPSKSTIRPKNDVT). Residues 109–120 (SSNPYSKPSSKS) show a composition bias toward low complexity. Over residues 121–133 (FQQCEAGSSTTGE) the composition is skewed to polar residues. The short motif at 185 to 187 (KEN) is the KEN box element. Over residues 192 to 203 (LTEPERKPDPKL) the composition is skewed to basic and acidic residues. 3 disordered regions span residues 192-217 (LTEP…YNQT), 256-276 (VKSQ…KPSR), and 385-411 (RFNS…NNGF). Residue Lys198 forms a Glycyl lysine isopeptide (Lys-Gly) (interchain with G-Cter in SUMO1); alternate linkage. Lys198 participates in a covalent cross-link: Glycyl lysine isopeptide (Lys-Gly) (interchain with G-Cter in SUMO2); alternate. Position 204 is a phosphotyrosine (Tyr204). Residues 389 to 411 (AIPSTPSIRPNGTSGNKHNNNGF) are compositionally biased toward polar residues. At Thr742 the chain carries Phosphothreonine. Residue Ser745 is modified to Phosphoserine.

It belongs to the CKAP2 family. Post-translationally, ubiquitinated by the anaphase promoting complex/cyclosome (APC/C).

Its subcellular location is the cytoplasm. It localises to the cytoskeleton. The protein resides in the spindle pole. Microtubule-associated protein required for mitotic spindle formation and cell-cycle progression in neural progenitor cells. The chain is Cytoskeleton-associated protein 2-like (CKAP2L) from Homo sapiens (Human).